Reading from the N-terminus, the 569-residue chain is Endonuclease/exonuclease/phosphatase family domain-containing protein 1 (569 aa).

Residues 1–20 (MGSTLGCHRSIPRDPSDLSH) form a disordered region. Gly-2 carries the N-myristoyl glycine lipid modification. Over residues 11–20 (IPRDPSDLSH) the composition is skewed to basic and acidic residues. 3 positions are modified to phosphoserine: Ser-16, Ser-21, and Ser-25. Positions 38-67 (ERLNINTATEEELMTLPGVTRAVARSIVEY) constitute a HhH domain. Residues Ser-106, Ser-110, Ser-160, and Ser-173 each carry the phosphoserine modification. The tract at residues 200–224 (SRPPSTHTNGGLTFTAKPHPSPTSL) is disordered. The span at 202–211 (PPSTHTNGGL) shows a compositional bias: polar residues. Thr-265 bears the Phosphothreonine mark. Positions 548–569 (EVPRNGNGVTLEPSEANVKHER) are disordered.

In Rattus norvegicus (Rat), this protein is Endonuclease/exonuclease/phosphatase family domain-containing protein 1 (Eepd1).